The following is a 729-amino-acid chain: MSKFIEPSNEEIKLEKLYQDMGLSDKEYDKVVEILGREPNFTEVGIFSVMWSEHCSYKHSKPFLKQFPTTGEHVLMGPGEGAGVVDIGDNQAVVFKVESHNHPSAIEPYQGAATGVGGIIRDIVSIGARPINLLNSLRFGELTVKQNQRLLKGVVSGIGGYGNCIGIPTTAGEIEFDERYDGNPLVNAMCVGIIDHDMVQKGTAKGVGNSVIYVGLKTGRDGIHGATFASEELTEESESKRPSVQIGDPFVGKKLMEATLEAITFDELVGIQDMGAAGLTSSSSEMAAKGGSGLHLRLDQVPTREPGISPYEMMLSETQERMLLVVEKGTEQKFLDLFNKHELDSAVIGEVTDTDRFVLTYDDEVYADIPVQPLADEAPVYILEGEEKEYNTSKNDYSNIDVHDTFIKLLQHPTIASKHHLYEQYDQQVGANTIIKPGLQASVVRVEGTQKAIASTIDGEARYVFNQPYEGGKMVVAEAYRNLIAVGATPLAMTDCLNYGSPEKKEIYQQLIDSTKGMSEACKVLQTPVVSGNVSLYNETRGTSIFPTPVVGMVGLIEDVSYLKEFKPKAGDKIYLVGETRDDFGGSQLEKLLYGSVNHEFESIDLSDEVSKGKLIKQAIRNGIASHVQTVGKGGLLVTLAKISAHYDLGMQAQLDVTNAQLFSETQGRYIVVVKEGQTLDIDQAQEIGHLTHQQLFDISNSDVKMKENVSDIKQKWEGAIVQCLTTQD.

H54 is a catalytic residue. ATP-binding residues include Y57 and K96. Position 98 (E98) interacts with Mg(2+). Residues 99–102 (SHNH) and R121 contribute to the substrate site. H100 functions as the Proton acceptor in the catalytic mechanism. D122 contacts Mg(2+). Residue Q245 participates in substrate binding. D273 provides a ligand contact to Mg(2+). A substrate-binding site is contributed by 317–319 (ETQ). ATP contacts are provided by D495 and G532. N533 is a Mg(2+) binding site. S535 is a substrate binding site.

This sequence belongs to the FGAMS family. As to quaternary structure, monomer. Part of the FGAM synthase complex composed of 1 PurL, 1 PurQ and 2 PurS subunits.

It is found in the cytoplasm. It carries out the reaction N(2)-formyl-N(1)-(5-phospho-beta-D-ribosyl)glycinamide + L-glutamine + ATP + H2O = 2-formamido-N(1)-(5-O-phospho-beta-D-ribosyl)acetamidine + L-glutamate + ADP + phosphate + H(+). The protein operates within purine metabolism; IMP biosynthesis via de novo pathway; 5-amino-1-(5-phospho-D-ribosyl)imidazole from N(2)-formyl-N(1)-(5-phospho-D-ribosyl)glycinamide: step 1/2. In terms of biological role, part of the phosphoribosylformylglycinamidine synthase complex involved in the purines biosynthetic pathway. Catalyzes the ATP-dependent conversion of formylglycinamide ribonucleotide (FGAR) and glutamine to yield formylglycinamidine ribonucleotide (FGAM) and glutamate. The FGAM synthase complex is composed of three subunits. PurQ produces an ammonia molecule by converting glutamine to glutamate. PurL transfers the ammonia molecule to FGAR to form FGAM in an ATP-dependent manner. PurS interacts with PurQ and PurL and is thought to assist in the transfer of the ammonia molecule from PurQ to PurL. The sequence is that of Phosphoribosylformylglycinamidine synthase subunit PurL from Staphylococcus epidermidis (strain ATCC 35984 / DSM 28319 / BCRC 17069 / CCUG 31568 / BM 3577 / RP62A).